Consider the following 513-residue polypeptide: Sterol 14-alpha demethylase (513 aa).

The helical transmembrane segment at Phe-10 to Leu-30 threads the bilayer. 2 N-linked (GlcNAc...) asparagine glycosylation sites follow: Asn-37 and Asn-406. Cys-453 contributes to the heme binding site.

Belongs to the cytochrome P450 family. Heme is required as a cofactor.

Its subcellular location is the endoplasmic reticulum membrane. The catalysed reaction is a 14alpha-methyl steroid + 3 reduced [NADPH--hemoprotein reductase] + 3 O2 = a Delta(14) steroid + formate + 3 oxidized [NADPH--hemoprotein reductase] + 4 H2O + 4 H(+). It catalyses the reaction a 14alpha-methyl steroid + reduced [NADPH--hemoprotein reductase] + O2 = a 14alpha-hydroxymethyl steroid + oxidized [NADPH--hemoprotein reductase] + H2O + H(+). It carries out the reaction a 14alpha-hydroxymethyl steroid + reduced [NADPH--hemoprotein reductase] + O2 = a 14alpha-formyl steroid + oxidized [NADPH--hemoprotein reductase] + 2 H2O + H(+). The enzyme catalyses a 14alpha-formyl steroid + reduced [NADPH--hemoprotein reductase] + O2 = a Delta(14) steroid + formate + oxidized [NADPH--hemoprotein reductase] + H2O + 2 H(+). The catalysed reaction is lanosterol + 3 reduced [NADPH--hemoprotein reductase] + 3 O2 = 4,4-dimethyl-5alpha-cholesta-8,14,24-trien-3beta-ol + formate + 3 oxidized [NADPH--hemoprotein reductase] + 4 H2O + 4 H(+). It catalyses the reaction lanosterol + reduced [NADPH--hemoprotein reductase] + O2 = 32-hydroxylanosterol + oxidized [NADPH--hemoprotein reductase] + H2O + H(+). It carries out the reaction 32-hydroxylanosterol + reduced [NADPH--hemoprotein reductase] + O2 = 32-oxolanosterol + oxidized [NADPH--hemoprotein reductase] + 2 H2O + H(+). The enzyme catalyses 32-oxolanosterol + reduced [NADPH--hemoprotein reductase] + O2 = 4,4-dimethyl-5alpha-cholesta-8,14,24-trien-3beta-ol + formate + oxidized [NADPH--hemoprotein reductase] + H2O + 2 H(+). The catalysed reaction is eburicol + 3 reduced [NADPH--hemoprotein reductase] + 3 O2 = 14-demethyleburicol + formate + 3 oxidized [NADPH--hemoprotein reductase] + 4 H2O + 4 H(+). It catalyses the reaction eburicol + reduced [NADPH--hemoprotein reductase] + O2 = 32-hydroxyeburicol + oxidized [NADPH--hemoprotein reductase] + H2O + H(+). It carries out the reaction 32-hydroxyeburicol + reduced [NADPH--hemoprotein reductase] + O2 = 32-oxoeburicol + oxidized [NADPH--hemoprotein reductase] + 2 H2O + H(+). The enzyme catalyses 32-oxoeburicol + reduced [NADPH--hemoprotein reductase] + O2 = 14-demethyleburicol + formate + oxidized [NADPH--hemoprotein reductase] + H2O + 2 H(+). The protein operates within steroid biosynthesis; sterol biosynthesis. Functionally, sterol 14alpha-demethylase, encoded by cyp51A, cyp51B and cyp51C, that plays a critical role in the third module of ergosterol biosynthesis pathway, being ergosterol the major sterol component in fungal membranes that participates in a variety of functions. The third module or late pathway involves the ergosterol synthesis itself through consecutive reactions that mainly occur in the endoplasmic reticulum (ER) membrane. In filamentous fungi, during the initial step of this module, lanosterol (lanosta-8,24-dien-3beta-ol) can be metabolized to eburicol. Sterol 14alpha-demethylase catalyzes the three-step oxidative removal of the 14alpha-methyl group (C-32) of both these sterols in the form of formate, and converts eburicol and lanosterol to 14-demethyleburicol (4,4,24-trimethylergosta-8,14,24(28)-trienol) and 4,4-dimethyl-5alpha-cholesta-8,14,24-trien-3beta-ol, respectively, which are further metabolized by other enzymes in the pathway to ergosterol. Can also use substrates not intrinsic to fungi, such as 24,25-dihydrolanosterol (DHL), producing 4,4'-dimethyl-8,14-cholestadien-3-beta-ol, but at lower rates than the endogenous substrates. Its function is as follows. As a target of azole drugs, plays a crucial role in azole susceptibility. This Aspergillus flavus (strain ATCC 200026 / FGSC A1120 / IAM 13836 / NRRL 3357 / JCM 12722 / SRRC 167) protein is Sterol 14-alpha demethylase.